The chain runs to 217 residues: PMKEVSIRGQGSLAYPGLRTQGNLETLSGPNDATRGLTSLADTFEHVIEELLDEQQVIQPSKENKDADLYSSRVMLSSQVPLEPPLLFLLEEYKNYLDAANMSMRVRRHSDPARRGELSVCDSTSEWVTAAEKKTAVDMSGATVTVLEKVPVPKGQLKQYFYETKCSSKGYAKEGCRGIDKRYWNSQCRTTQSYVRALTMDNKKRVGWRFIRIDTSC.

The propeptide occupies 1-108; the sequence is PMKEVSIRGQ…AANMSMRVRR (108 aa). A glycan (N-linked (GlcNAc...) asparagine) is linked at asparagine 101. 2 cysteine pairs are disulfide-bonded: cysteine 121/cysteine 188 and cysteine 166/cysteine 217.

It belongs to the NGF-beta family.

It is found in the secreted. Promotes the survival of neuronal populations that are all located either in the central nervous system or directly connected to it. The sequence is that of Neurotrophic factor BDNF precursor form (BDNF) from Acrantophis dumerili (Dumeril's ground boa).